Consider the following 482-residue polypeptide: Protein DETOXIFICATION 9 (482 aa).

Transmembrane regions (helical) follow at residues 32–49 (VASM…QYLL), 64–84 (ALAG…GVLF), 111–131 (FTSI…WMFM), 144–164 (IAEL…GYSV), 180–200 (PMVL…WLMV), 209–229 (GAAA…WVYM), 261–281 (AMMC…SGLL), 289–309 (SVIS…NGIG), 332–352 (AAAA…SLFL), 374–394 (ITPI…LSGI), 403–423 (IGAY…GLLL), and 435–455 (WAGL…VIGF).

This sequence belongs to the multi antimicrobial extrusion (MATE) (TC 2.A.66.1) family.

It localises to the membrane. The protein is Protein DETOXIFICATION 9 of Arabidopsis thaliana (Mouse-ear cress).